The sequence spans 154 residues: Aspartate carbamoyltransferase regulatory chain (154 aa).

Zn(2+) contacts are provided by Cys-109, Cys-114, Cys-138, and Cys-141.

The protein belongs to the PyrI family. Heterododecamer (2C3:3R2) of six catalytic PyrB chains organized as two trimers (C3), and six regulatory PyrI chains organized as three dimers (R2). It depends on Zn(2+) as a cofactor.

In terms of biological role, involved in allosteric regulation of aspartate carbamoyltransferase. The chain is Aspartate carbamoyltransferase regulatory chain (pyrI) from Serratia marcescens.